A 245-amino-acid chain; its full sequence is 1-(5-phosphoribosyl)-5-[(5-phosphoribosylamino)methylideneamino] imidazole-4-carboxamide isomerase (245 aa).

The active-site Proton acceptor is D7. D129 (proton donor) is an active-site residue.

Belongs to the HisA/HisF family.

The protein resides in the cytoplasm. The enzyme catalyses 1-(5-phospho-beta-D-ribosyl)-5-[(5-phospho-beta-D-ribosylamino)methylideneamino]imidazole-4-carboxamide = 5-[(5-phospho-1-deoxy-D-ribulos-1-ylimino)methylamino]-1-(5-phospho-beta-D-ribosyl)imidazole-4-carboxamide. Its pathway is amino-acid biosynthesis; L-histidine biosynthesis; L-histidine from 5-phospho-alpha-D-ribose 1-diphosphate: step 4/9. This Escherichia coli O17:K52:H18 (strain UMN026 / ExPEC) protein is 1-(5-phosphoribosyl)-5-[(5-phosphoribosylamino)methylideneamino] imidazole-4-carboxamide isomerase.